The sequence spans 350 residues: 3-dehydroquinate synthase (350 aa).

NAD(+)-binding positions include 106–110 (GVIGD), 130–131 (TS), lysine 143, and lysine 152. 3 residues coordinate Zn(2+): glutamate 185, histidine 246, and histidine 263.

Belongs to the sugar phosphate cyclases superfamily. Dehydroquinate synthase family. Co(2+) is required as a cofactor. The cofactor is Zn(2+). Requires NAD(+) as cofactor.

The protein resides in the cytoplasm. It catalyses the reaction 7-phospho-2-dehydro-3-deoxy-D-arabino-heptonate = 3-dehydroquinate + phosphate. The protein operates within metabolic intermediate biosynthesis; chorismate biosynthesis; chorismate from D-erythrose 4-phosphate and phosphoenolpyruvate: step 2/7. In terms of biological role, catalyzes the conversion of 3-deoxy-D-arabino-heptulosonate 7-phosphate (DAHP) to dehydroquinate (DHQ). The chain is 3-dehydroquinate synthase from Clostridium beijerinckii (strain ATCC 51743 / NCIMB 8052) (Clostridium acetobutylicum).